The chain runs to 124 residues: Small ribosomal subunit protein bS6 (124 aa).

The tract at residues 101–124 (IMMKEVQREEARKSAQSDAPAVAA) is disordered. A compositionally biased stretch (basic and acidic residues) spans 105–115 (EVQREEARKSA).

This sequence belongs to the bacterial ribosomal protein bS6 family.

In terms of biological role, binds together with bS18 to 16S ribosomal RNA. This Polynucleobacter asymbioticus (strain DSM 18221 / CIP 109841 / QLW-P1DMWA-1) (Polynucleobacter necessarius subsp. asymbioticus) protein is Small ribosomal subunit protein bS6.